A 352-amino-acid polypeptide reads, in one-letter code: MEHHHLLLQLSPPPPPPPLPAAHLMMSPSFFDAGVFADVGGDWMEDLMHLGELFGVGVGGDDDDNGGVDGGVGGGDDRMQEWQNNCEGAGSPDHQPSCGDGDGDGDGDVSPRDGELGDGDGDNSATRKRRDRSKTIVSERKRRVRMKEKLYELRALVPNITKMDKASIIADAVVYVKDLQAHARKLKEEVAALEEARPIRPPPPSAAAQRPQRQPRRVAAAAAQLARAADAAAVTTAAAAPHGARVAHVGAAQVGEGRFFVTVECEPAAAAARGGGGGVAAPVCAAVESLSCFTVESSTVGCSPDRVVATLTLKVSEAEEDVSAISECTVKLWVMAALLKEGFRPQPTVQIS.

A disordered region spans residues 59–141 (GGDDDDNGGV…RSKTIVSERK (83 aa)). Residues 130–143 (RDRSKTIVSERKRR) are basic motif. The region spanning 130–179 (RDRSKTIVSERKRRVRMKEKLYELRALVPNITKMDKASIIADAVVYVKDL) is the bHLH domain. The tract at residues 144–179 (VRMKEKLYELRALVPNITKMDKASIIADAVVYVKDL) is helix-loop-helix motif. The segment at 194-216 (EEARPIRPPPPSAAAQRPQRQPR) is disordered. Residues 206 to 216 (AAAQRPQRQPR) are compositionally biased toward low complexity.

It belongs to the bHLH protein family. In terms of assembly, forms homodimers. Interacts with IRO2 in the nucleus. Expressed in the meristematic zone of lateral and primary roots.

It is found in the nucleus. Functionally, transcription factor involved in positive regulation of genes involved in strategy II iron acquisition, including genes for mugineic acid (MA) family phytosiderophores biosynthesis, and genes involved in S-adenosylmethionine cycle and iron transport. May play a role in the regulation of iron deficiency response by promoting the nuclear localization of IRO2. Possesses transactivation activity in yeast. This is Transcription factor BHLH156 from Oryza sativa subsp. japonica (Rice).